The following is a 459-amino-acid chain: Glutamate--tRNA ligase 2 (459 aa).

The short motif at 8-18 (PSPTGYIHIGN) is the 'HIGH' region element. The 'KMSKS' region signature appears at 249–253 (GLSKR). Lysine 252 contacts ATP.

The protein belongs to the class-I aminoacyl-tRNA synthetase family. Glutamate--tRNA ligase type 1 subfamily. Monomer.

It is found in the cytoplasm. The enzyme catalyses tRNA(Glu) + L-glutamate + ATP = L-glutamyl-tRNA(Glu) + AMP + diphosphate. Catalyzes the attachment of glutamate to tRNA(Glu) in a two-step reaction: glutamate is first activated by ATP to form Glu-AMP and then transferred to the acceptor end of tRNA(Glu). The chain is Glutamate--tRNA ligase 2 from Bartonella henselae (strain ATCC 49882 / DSM 28221 / CCUG 30454 / Houston 1) (Rochalimaea henselae).